The sequence spans 444 residues: Cobyrinate a,c-diamide synthase (444 aa).

The GATase cobBQ-type domain occupies 250–438; it reads IIAIAQDRAF…PHIHFFGSYK (189 aa). Cys-332 serves as the catalytic Nucleophile.

Belongs to the CobB/CbiA family. Mg(2+) is required as a cofactor.

The catalysed reaction is cob(II)yrinate + 2 L-glutamine + 2 ATP + 2 H2O = cob(II)yrinate a,c diamide + 2 L-glutamate + 2 ADP + 2 phosphate + 2 H(+). It functions in the pathway cofactor biosynthesis; adenosylcobalamin biosynthesis; cob(II)yrinate a,c-diamide from sirohydrochlorin (anaerobic route): step 10/10. Its function is as follows. Catalyzes the ATP-dependent amidation of the two carboxylate groups at positions a and c of cobyrinate, using either L-glutamine or ammonia as the nitrogen source. In Fusobacterium nucleatum subsp. nucleatum (strain ATCC 25586 / DSM 15643 / BCRC 10681 / CIP 101130 / JCM 8532 / KCTC 2640 / LMG 13131 / VPI 4355), this protein is Cobyrinate a,c-diamide synthase.